Consider the following 94-residue polypeptide: Ig kappa-B5 chain V region 2699 (94 aa).

The segment at 1 to 23 is framework-1; the sequence is AFELTQTPSSVEAAVGGTVTINC. The complementarity-determining-1 stretch occupies residues 24 to 34; the sequence is QASTDISSNLA. The tract at residues 35–49 is framework-2; that stretch reads WYTPKPGSPPKLLIY. The interval 50–56 is complementarity-determining-2; it reads SASTLAS. The interval 57–82 is framework-3; it reads GVSSRFKGSGSGVLITLTISDLECGV. Serine 83 is a region of interest (complementarity-determining-3). The tract at residues 84 to 93 is framework-4; it reads FGGGTKVVVE.

The polypeptide is Ig kappa-B5 chain V region 2699 (Oryctolagus cuniculus (Rabbit)).